Reading from the N-terminus, the 602-residue chain is Elongation factor 4 (602 aa).

A tr-type G domain is found at 8–189; it reads KNIRNFSIIA…KIITTIPAPS (182 aa). Residues 20-25 and 136-139 contribute to the GTP site; these read DHGKST and NKID.

The protein belongs to the TRAFAC class translation factor GTPase superfamily. Classic translation factor GTPase family. LepA subfamily.

It is found in the cell inner membrane. The enzyme catalyses GTP + H2O = GDP + phosphate + H(+). Required for accurate and efficient protein synthesis under certain stress conditions. May act as a fidelity factor of the translation reaction, by catalyzing a one-codon backward translocation of tRNAs on improperly translocated ribosomes. Back-translocation proceeds from a post-translocation (POST) complex to a pre-translocation (PRE) complex, thus giving elongation factor G a second chance to translocate the tRNAs correctly. Binds to ribosomes in a GTP-dependent manner. This Helicobacter pylori (strain ATCC 700392 / 26695) (Campylobacter pylori) protein is Elongation factor 4.